Here is a 255-residue protein sequence, read N- to C-terminus: SLA class II histocompatibility antigen, DQ haplotype D alpha chain (255 aa).

The signal sequence occupies residues 1-23 (MVPGRVLMWGALALTAVMSACGG). The tract at residues 24 to 120 (EDIAADHVAS…QVPEVTVFPK (97 aa)) is alpha-1. The Extracellular portion of the chain corresponds to 24 to 217 (EDIAADHVAS…IPAPMSELTE (194 aa)). N-linked (GlcNAc...) asparagine glycans are attached at residues Asn-104 and Asn-144. The Ig-like C1-type domain occupies 113–205 (PEVTVFPKSP…LDKPLLKHWE (93 aa)). Residues 121 to 204 (SPVMLGQPNT…GLDKPLLKHW (84 aa)) form an alpha-2 region. An intrachain disulfide couples Cys-133 to Cys-189. Positions 205 to 217 (EPEIPAPMSELTE) are connecting peptide. The chain crosses the membrane as a helical span at residues 218–240 (TVVCALGLIVGLVGIVVGTVFII). At 241 to 255 (QGLRSGGPSRHQGSL) the chain is on the cytoplasmic side.

Belongs to the MHC class II family.

The protein resides in the membrane. This Sus scrofa (Pig) protein is SLA class II histocompatibility antigen, DQ haplotype D alpha chain.